We begin with the raw amino-acid sequence, 594 residues long: Probable acyl-CoA dehydrogenase (594 aa).

E405 (proton acceptor) is an active-site residue.

The protein belongs to the acyl-CoA dehydrogenase family. FAD serves as cofactor.

It carries out the reaction a 2,3-saturated acyl-CoA + A = a 2,3-dehydroacyl-CoA + AH2. The protein operates within lipid metabolism; fatty acid beta-oxidation. In terms of biological role, involved in the degradation of long-chain fatty acids. In Bacillus subtilis (strain 168), this protein is Probable acyl-CoA dehydrogenase (fadE).